A 101-amino-acid polypeptide reads, in one-letter code: Gastrin (101 aa).

Positions 1-21 (MPRLCVYMLVLVLALATFSEA) are cleaved as a signal peptide. The disordered stretch occupies residues 23 to 101 (WKPRSQLQDA…FGRRSAEEDQ (79 aa)). Residues 25–37 (PRSQLQDASSGPG) show a composition bias toward polar residues. At Y87 the chain carries Sulfotyrosine. F92 bears the Phenylalanine amide mark. Basic and acidic residues predominate over residues 92–101 (FGRRSAEEDQ). S96 carries the phosphoserine modification. The propeptide occupies 96-101 (SAEEDQ).

This sequence belongs to the gastrin/cholecystokinin family. Post-translationally, sulfation enhances proteolytic processing, and blocks peptide degradation. Levels of sulfation differ between proteolytically-cleaved gastrins and between tissues. Abundantly expressed in the stomach and duodenum. Low levels in brain, ovary and pancreas.

The protein resides in the secreted. In terms of biological role, gastrin stimulates the stomach mucosa to produce and secrete hydrochloric acid and the pancreas to secrete its digestive enzymes. It also stimulates smooth muscle contraction and increases blood circulation and water secretion in the stomach and intestine. This is Gastrin (Gast) from Mus musculus (Mouse).